Consider the following 107-residue polypeptide: UPF0145 protein YbjQ (107 aa).

Belongs to the UPF0145 family.

The polypeptide is UPF0145 protein YbjQ (Salmonella gallinarum (strain 287/91 / NCTC 13346)).